The following is a 338-amino-acid chain: Tetraacyldisaccharide 4'-kinase (338 aa).

51–58 contacts ATP; it reads HLGGAGKT.

This sequence belongs to the LpxK family.

It carries out the reaction a lipid A disaccharide + ATP = a lipid IVA + ADP + H(+). The protein operates within glycolipid biosynthesis; lipid IV(A) biosynthesis; lipid IV(A) from (3R)-3-hydroxytetradecanoyl-[acyl-carrier-protein] and UDP-N-acetyl-alpha-D-glucosamine: step 6/6. Transfers the gamma-phosphate of ATP to the 4'-position of a tetraacyldisaccharide 1-phosphate intermediate (termed DS-1-P) to form tetraacyldisaccharide 1,4'-bis-phosphate (lipid IVA). This is Tetraacyldisaccharide 4'-kinase from Rhodopseudomonas palustris (strain HaA2).